Here is a 374-residue protein sequence, read N- to C-terminus: Glutamate 5-kinase (374 aa).

Lys-9 is an ATP binding site. Substrate-binding residues include Ser-49, Asp-136, and Asn-148. ATP-binding positions include Thr-168–Asp-169 and Thr-210–Lys-216. The 79-residue stretch at Ser-276–Val-354 folds into the PUA domain.

This sequence belongs to the glutamate 5-kinase family.

The protein resides in the cytoplasm. It carries out the reaction L-glutamate + ATP = L-glutamyl 5-phosphate + ADP. Its pathway is amino-acid biosynthesis; L-proline biosynthesis; L-glutamate 5-semialdehyde from L-glutamate: step 1/2. Functionally, catalyzes the transfer of a phosphate group to glutamate to form L-glutamate 5-phosphate. The protein is Glutamate 5-kinase of Halalkalibacterium halodurans (strain ATCC BAA-125 / DSM 18197 / FERM 7344 / JCM 9153 / C-125) (Bacillus halodurans).